A 946-amino-acid chain; its full sequence is Atos homolog protein A (946 aa).

Residues 24 to 32 (ALLITEGRT) form a transactivation domain 1 (TAD1) region. Over residues 34 to 43 (EHSVKGRTEG) the composition is skewed to basic and acidic residues. 4 disordered regions span residues 34-58 (EHSV…APNK), 246-271 (SVTQ…FTKP), 484-524 (FQSS…TGNQ), and 547-567 (SCTD…SQKV). Polar residues-rich tracts occupy residues 247–267 (VTQP…SQHA) and 484–500 (FQSS…NENI). Composition is skewed to basic and acidic residues over residues 503–517 (LPEK…HGEI) and 547–560 (SCTD…KDNP). The segment at 749-806 (LLGNFEESVLNYRFEPLGVVEGFTAEVGASGIFCPTHMTLPVKVSFYSVSDDNAPSPY) is required for macropage invasion. The tract at residues 833–841 (FNPNKTVVK) is transactivation domain 2 (TAD2).

Belongs to the ATOS family.

Its subcellular location is the nucleus. Transcription regulator that syncronizes transcriptional and translational programs to promote macrophage invasion of tissues. This is Atos homolog protein A (atosa) from Xenopus tropicalis (Western clawed frog).